A 576-amino-acid chain; its full sequence is Sodium/hydrogen exchanger 8 (576 aa).

11 consecutive transmembrane segments (helical) span residues 55-75, 79-99, 118-138, 151-171, 186-206, 256-276, 306-326, 349-369, 374-394, 412-432, and 446-466; these read MTIF…HLLI, LHFL…GAVI, PNMF…YSLH, LFAV…IYFL, FAFG…IFNA, LGYF…TGLI, GLAE…GIVM, VAFL…FSFP, ISFV…NIFP, MFIM…SLHL, and TTIV…MPLI. Phosphothreonine is present on Thr-505. Residues Ser-566 and Ser-568 each carry the phosphoserine modification.

This sequence belongs to the monovalent cation:proton antiporter 1 (CPA1) transporter (TC 2.A.36) family. As to expression, predominantly expressed in the liver, skeletal muscle, kidney, and testis. Expressed in both renal cortex and medulla. Detected throughout the entire gastrointestinal tract, with high expression detected in stomach, duodenum and ascending colon. In gastric epithelium; expressed in the glands within the fundus and pylorus regions.

It is found in the golgi apparatus membrane. The protein resides in the golgi apparatus. It localises to the trans-Golgi network membrane. The protein localises to the endosome. Its subcellular location is the multivesicular body membrane. It is found in the apical cell membrane. The protein resides in the cytoplasmic vesicle. It localises to the secretory vesicle. The protein localises to the acrosome. The catalysed reaction is Na(+)(in) + H(+)(out) = Na(+)(out) + H(+)(in). Functionally, na(+)/H(+) antiporter. Mediates the electoneutral exchange of intracellular H(+) ions for extracellular Na(+) in 1:1 stoichiometry. Acts as an Na(+)/H(+) exchanger in the trans-Golgi. Contributes to the regulation of pH regulation of Golgi apparatus, and consequently, in protein trafficking and endosomal morphology. Plays a crucial role in germ cells in acrosome biogenesis and sperm development, probably by playing a role in the fusion of the Golgi-derived vesicles that form the acrosomal cap. Can also be active at the cell surface of specialized cells. In the small intestine, plays a major physiological role in transepithelial absorption of Na(+). Regulates intracellular pH homeostasis of intestinal epithelial cells. Acts as an important regulator of mucosal integrity in the intestine and in the stomach, could mediate the pH fluctuation necessary for mucin exocytosis or assist membrane trafficking of other proteins. Plays a role in photoreceptor survival and in the maintenance of intracellular pH homeostasis in retinal pigment epithelium (RPE cells). The sequence is that of Sodium/hydrogen exchanger 8 (Slc9a8) from Mus musculus (Mouse).